Reading from the N-terminus, the 417-residue chain is MDRETRALADSHFRGLGVDVPGVGQAPGRVAFVSEPGAFSYADFVRGFLLPNLPCVFSSAFTQGWGSRRRWVTPAGRPDFDHLLRTYGDVVVPVANCGVQEYNSNPKEHMTLRDYITYWKEYIQAGYSSPRGCLYLKDWHLCRDFPVEDVFTLPVYFSSDWLNEFWDALDVDDYRFVYAGPAGSWSPFHADIFRSFSWSVNVCGRKKWLLFPPGQEEALRDRHGNLPYDVTSPALCDTHLHPRNQLAGPPLEITQEAGEMVFVPSGWHHQVHNLDDTISINHNWVNGFNLANMWRFLQQELCAVQEEVSEWRDSMPDWHHHCQVIMRSCSGINFEEFYHFLKVIAEKRLLVLREAAAEDGAGLGFEQAAFDVGRITEVLASLVAHPDFQRVDTSAFSPQPKELLQQLREAVDAAAAP.

In terms of domain architecture, JmjC spans 142–301; sequence CRDFPVEDVF…NMWRFLQQEL (160 aa). 3 residues coordinate Fe cation: His189, Asp191, and His269.

The protein belongs to the JMJD6 family. In terms of assembly, interacts with ETF1. Interacts with the ETF1-GSPT1 complex. The cofactor is Fe(2+).

The protein localises to the cytoplasm. It carries out the reaction L-lysyl-[protein] + 2-oxoglutarate + O2 = 4-hydroxy-L-lysyl-[protein] + succinate + CO2. Its function is as follows. Catalyzes the 2-oxoglutarate and iron-dependent C4-lysyl hydroxylation of ETF1 at 'Lys-63' thereby promoting the translational termination efficiency of ETF1. This is 2-oxoglutarate and iron-dependent oxygenase JMJD4 (JMJD4) from Homo sapiens (Human).